A 54-amino-acid polypeptide reads, in one-letter code: Photosystem II reaction center protein K (54 aa).

Positions 1-17 (MLLEHVTITLLNNTSFA) are excised as a propeptide. A helical transmembrane segment spans residues 29-49 (LIDVLPIIPLLFLLLAFVWQA).

It belongs to the PsbK family. As to quaternary structure, PSII is composed of 1 copy each of membrane proteins PsbA, PsbB, PsbC, PsbD, PsbE, PsbF, PsbH, PsbI, PsbJ, PsbK, PsbL, PsbM, PsbT, PsbY, PsbZ, Psb30/Ycf12, at least 3 peripheral proteins of the oxygen-evolving complex and a large number of cofactors. It forms dimeric complexes.

The protein resides in the plastid. It localises to the chloroplast thylakoid membrane. In terms of biological role, one of the components of the core complex of photosystem II (PSII). PSII is a light-driven water:plastoquinone oxidoreductase that uses light energy to abstract electrons from H(2)O, generating O(2) and a proton gradient subsequently used for ATP formation. It consists of a core antenna complex that captures photons, and an electron transfer chain that converts photonic excitation into a charge separation. The polypeptide is Photosystem II reaction center protein K (Euglena mutabilis).